The primary structure comprises 600 residues: Probable translation initiation factor IF-2 (600 aa).

The region spanning 10–227 (LRQPIVVVLG…LLAGLTQRYL (218 aa)) is the tr-type G domain. The interval 19-26 (GHVDHGKT) is G1. GTP is bound at residue 19 to 26 (GHVDHGKT). Positions 44–48 (EMTQE) are G2. The G3 stretch occupies residues 83-86 (DTPG). GTP-binding positions include 83 to 87 (DTPGH) and 137 to 140 (NKID). The tract at residues 137 to 140 (NKID) is G4. Residues 205–207 (SAK) form a G5 region.

Belongs to the TRAFAC class translation factor GTPase superfamily. Classic translation factor GTPase family. IF-2 subfamily.

In terms of biological role, function in general translation initiation by promoting the binding of the formylmethionine-tRNA to ribosomes. Seems to function along with eIF-2. The protein is Probable translation initiation factor IF-2 of Saccharolobus solfataricus (strain ATCC 35092 / DSM 1617 / JCM 11322 / P2) (Sulfolobus solfataricus).